A 20-amino-acid polypeptide reads, in one-letter code: Cytochrome c oxidase subunit 6A1, mitochondrial (20 aa).

This sequence belongs to the cytochrome c oxidase subunit 6A family. As to quaternary structure, component of the cytochrome c oxidase (complex IV, CIV), a multisubunit enzyme composed of 14 subunits. The complex is composed of a catalytic core of 3 subunits MT-CO1, MT-CO2 and MT-CO3, encoded in the mitochondrial DNA, and 11 supernumerary subunits COX4I, COX5A, COX5B, COX6A, COX6B, COX6C, COX7A, COX7B, COX7C, COX8 and NDUFA4, which are encoded in the nuclear genome. The complex exists as a monomer or a dimer and forms supercomplexes (SCs) in the inner mitochondrial membrane with NADH-ubiquinone oxidoreductase (complex I, CI) and ubiquinol-cytochrome c oxidoreductase (cytochrome b-c1 complex, complex III, CIII), resulting in different assemblies (supercomplex SCI(1)III(2)IV(1) and megacomplex MCI(2)III(2)IV(2)). As to expression, liver specific isoform.

Its subcellular location is the mitochondrion inner membrane. It participates in energy metabolism; oxidative phosphorylation. Its function is as follows. Component of the cytochrome c oxidase, the last enzyme in the mitochondrial electron transport chain which drives oxidative phosphorylation. The respiratory chain contains 3 multisubunit complexes succinate dehydrogenase (complex II, CII), ubiquinol-cytochrome c oxidoreductase (cytochrome b-c1 complex, complex III, CIII) and cytochrome c oxidase (complex IV, CIV), that cooperate to transfer electrons derived from NADH and succinate to molecular oxygen, creating an electrochemical gradient over the inner membrane that drives transmembrane transport and the ATP synthase. Cytochrome c oxidase is the component of the respiratory chain that catalyzes the reduction of oxygen to water. Electrons originating from reduced cytochrome c in the intermembrane space (IMS) are transferred via the dinuclear copper A center (CU(A)) of subunit 2 and heme A of subunit 1 to the active site in subunit 1, a binuclear center (BNC) formed by heme A3 and copper B (CU(B)). The BNC reduces molecular oxygen to 2 water molecules unsing 4 electrons from cytochrome c in the IMS and 4 protons from the mitochondrial matrix. The protein is Cytochrome c oxidase subunit 6A1, mitochondrial (COX6A1) of Ovis aries (Sheep).